We begin with the raw amino-acid sequence, 330 residues long: 7,8-didemethyl-8-hydroxy-5-deazariboflavin synthase (330 aa).

Positions 5 to 245 constitute a Radical SAM core domain; sequence VTFSRNVFIP…SDVAVQVAPN (241 aa). Residues Cys-19, Cys-23, and Cys-26 each contribute to the [4Fe-4S] cluster site.

This sequence belongs to the radical SAM superfamily. CofG family. As to quaternary structure, consists of two subunits, CofG and CofH. It depends on [4Fe-4S] cluster as a cofactor.

The catalysed reaction is 5-amino-5-(4-hydroxybenzyl)-6-(D-ribitylimino)-5,6-dihydrouracil + S-adenosyl-L-methionine = 7,8-didemethyl-8-hydroxy-5-deazariboflavin + 5'-deoxyadenosine + L-methionine + NH4(+) + H(+). The protein operates within cofactor biosynthesis; coenzyme F0 biosynthesis. Catalyzes the radical-mediated synthesis of 7,8-didemethyl-8-hydroxy-5-deazariboflavin from 5-amino-5-(4-hydroxybenzyl)-6-(D-ribitylimino)-5,6-dihydrouracil. This Methanococcoides burtonii (strain DSM 6242 / NBRC 107633 / OCM 468 / ACE-M) protein is 7,8-didemethyl-8-hydroxy-5-deazariboflavin synthase.